The sequence spans 126 residues: Aspartate 1-decarboxylase (126 aa).

Serine 25 functions as the Schiff-base intermediate with substrate; via pyruvic acid in the catalytic mechanism. Residue serine 25 is modified to Pyruvic acid (Ser). Position 57 (threonine 57) interacts with substrate. The active-site Proton donor is the tyrosine 58. Residue glycine 73–alanine 75 participates in substrate binding.

The protein belongs to the PanD family. Heterooctamer of four alpha and four beta subunits. Pyruvate serves as cofactor. Is synthesized initially as an inactive proenzyme, which is activated by self-cleavage at a specific serine bond to produce a beta-subunit with a hydroxyl group at its C-terminus and an alpha-subunit with a pyruvoyl group at its N-terminus.

It localises to the cytoplasm. It carries out the reaction L-aspartate + H(+) = beta-alanine + CO2. Its pathway is cofactor biosynthesis; (R)-pantothenate biosynthesis; beta-alanine from L-aspartate: step 1/1. Catalyzes the pyruvoyl-dependent decarboxylation of aspartate to produce beta-alanine. The protein is Aspartate 1-decarboxylase of Edwardsiella ictaluri (strain 93-146).